The chain runs to 99 residues: uncharacterized protein (99 aa).

This is an uncharacterized protein from Caenorhabditis elegans.